Reading from the N-terminus, the 410-residue chain is Imidazolonepropionase (410 aa).

Positions 71 and 73 each coordinate Fe(3+). Positions 71 and 73 each coordinate Zn(2+). 4-imidazolone-5-propanoate contacts are provided by Arg-80, Tyr-143, and His-175. Tyr-143 contacts N-formimidoyl-L-glutamate. His-235 contacts Fe(3+). Position 235 (His-235) interacts with Zn(2+). Glu-238 serves as a coordination point for 4-imidazolone-5-propanoate. Fe(3+) is bound at residue Asp-309. Asp-309 contacts Zn(2+).

It belongs to the metallo-dependent hydrolases superfamily. HutI family. Zn(2+) serves as cofactor. Fe(3+) is required as a cofactor.

The protein resides in the cytoplasm. The catalysed reaction is 4-imidazolone-5-propanoate + H2O = N-formimidoyl-L-glutamate. Its pathway is amino-acid degradation; L-histidine degradation into L-glutamate; N-formimidoyl-L-glutamate from L-histidine: step 3/3. Catalyzes the hydrolytic cleavage of the carbon-nitrogen bond in imidazolone-5-propanoate to yield N-formimidoyl-L-glutamate. It is the third step in the universal histidine degradation pathway. The polypeptide is Imidazolonepropionase (Thermoplasma acidophilum (strain ATCC 25905 / DSM 1728 / JCM 9062 / NBRC 15155 / AMRC-C165)).